The primary structure comprises 520 residues: Nucleobase-ascorbate transporter 1 (520 aa).

12 consecutive transmembrane segments (helical) span residues 36–56, 64–84, 86–106, 129–149, 150–170, 174–194, 213–233, 279–299, 362–382, 384–404, 415–435, and 453–473; these read YILM…AMGG, VIQT…LFGT, LPAV…IIND, ALIV…WGLF, SRFF…LGMF, FPQL…VIGL, FPIL…TASG, FAMM…YIAA, GFMI…SIPV, IYAA…LSFL, LMIT…FAQY, and AFLN…AVFM.

It belongs to the nucleobase:cation symporter-2 (NCS2) (TC 2.A.40) family. In terms of tissue distribution, expressed in cotyledons 4 days after imbibition (DAI). Expressed in the minor and major veins of cotyledons and leaves, in the shoot apex and pedicels. Expressed in the root meristems, root tips and lateral root primordia.

Its subcellular location is the membrane. This is Nucleobase-ascorbate transporter 1 (NAT1) from Arabidopsis thaliana (Mouse-ear cress).